We begin with the raw amino-acid sequence, 71 residues long: Small ribosomal subunit protein bS21 (71 aa).

Over residues 48–59 (EKASLAKRHAKR) the composition is skewed to basic residues. Residues 48–71 (EKASLAKRHAKRNFRENARNTRLY) are disordered. A compositionally biased stretch (basic and acidic residues) spans 60–71 (NFRENARNTRLY).

It belongs to the bacterial ribosomal protein bS21 family.

The protein is Small ribosomal subunit protein bS21 of Glaesserella parasuis serovar 5 (strain SH0165) (Haemophilus parasuis).